The primary structure comprises 390 residues: Succinyl-diaminopimelate desuccinylase (390 aa).

Zn(2+) is bound at residue histidine 74. The active site involves aspartate 76. Aspartate 107 provides a ligand contact to Zn(2+). Glutamate 140 (proton acceptor) is an active-site residue. Residues glutamate 141, glutamate 169, and histidine 363 each coordinate Zn(2+).

It belongs to the peptidase M20A family. DapE subfamily. As to quaternary structure, homodimer. The cofactor is Zn(2+). Requires Co(2+) as cofactor.

The enzyme catalyses N-succinyl-(2S,6S)-2,6-diaminopimelate + H2O = (2S,6S)-2,6-diaminopimelate + succinate. Its pathway is amino-acid biosynthesis; L-lysine biosynthesis via DAP pathway; LL-2,6-diaminopimelate from (S)-tetrahydrodipicolinate (succinylase route): step 3/3. Functionally, catalyzes the hydrolysis of N-succinyl-L,L-diaminopimelic acid (SDAP), forming succinate and LL-2,6-diaminopimelate (DAP), an intermediate involved in the bacterial biosynthesis of lysine and meso-diaminopimelic acid, an essential component of bacterial cell walls. This Bartonella quintana (strain Toulouse) (Rochalimaea quintana) protein is Succinyl-diaminopimelate desuccinylase.